Reading from the N-terminus, the 254-residue chain is Sugar fermentation stimulation protein homolog (254 aa).

It belongs to the SfsA family.

The chain is Sugar fermentation stimulation protein homolog from Parasynechococcus marenigrum (strain WH8102).